The chain runs to 148 residues: MTITQVKIKKLENFSGSLPEYATEHSAGMDLIAANEQPITIKAAAIQLIPTGIAIALPDSFEAQIRPRSGLAVKHGITVANSPGTIDADYRGEIKVILINLGKEDFIIEKGMRIAQMIIAKYERILWEESISLMETMRGSGGFGSTSV.

Substrate-binding positions include 68–70 (RSG), Asn-81, 85–87 (TID), and Lys-95.

The protein belongs to the dUTPase family. Requires Mg(2+) as cofactor.

The enzyme catalyses dUTP + H2O = dUMP + diphosphate + H(+). Its pathway is pyrimidine metabolism; dUMP biosynthesis; dUMP from dCTP (dUTP route): step 2/2. This enzyme is involved in nucleotide metabolism: it produces dUMP, the immediate precursor of thymidine nucleotides and it decreases the intracellular concentration of dUTP so that uracil cannot be incorporated into DNA. The protein is Deoxyuridine 5'-triphosphate nucleotidohydrolase of Rickettsia peacockii (strain Rustic).